Consider the following 1028-residue polypeptide: Contactin-6 (1028 aa).

Positions 1 to 19 (MRLLWKLVILLPLINSSAG) are cleaved as a signal peptide. 6 Ig-like C2-type domains span residues 26–117 (PIFT…AKLQ), 122–208 (EDFE…RSVQ), 227–308 (PKIE…RNLA), 318–402 (PEWE…AELR), 408–495 (PDFS…GSLI), and 499–587 (RTVI…ESLS). Intrachain disulfides connect C50/C100, C144/C196, C249/C297, C339/C386, C431/C479, and C521/C577. Residues N65 and N193 are each glycosylated (N-linked (GlcNAc...) asparagine). N-linked (GlcNAc...) asparagine glycans are attached at residues N368, N377, and N468. Fibronectin type-III domains are found at residues 600–698 (PPED…TKAS), 703–800 (APVN…SGED), 805–901 (APRG…TKKS), and 902–996 (PPSQ…KMSS). 4 N-linked (GlcNAc...) asparagine glycosylation sites follow: N659, N765, N860, and N865. At Y882 the chain carries Phosphotyrosine. Over residues 887-902 (TGPSSPPVNVTTKKSP) the composition is skewed to polar residues. A disordered region spans residues 887–908 (TGPSSPPVNVTTKKSPPSQPPA). N895, N931, N956, and N957 each carry an N-linked (GlcNAc...) asparagine glycan. S999 carries the GPI-anchor amidated serine lipid modification. Positions 1000–1028 (RGIQFLEPSTHFLSIVIVIFHCFAIQPLI) are cleaved as a propeptide — removed in mature form.

The protein belongs to the immunoglobulin superfamily. Contactin family. As to quaternary structure, interacts with PTPRG. As to expression, expressed in nervous system. Highly expressed in cerebellum. Expressed at intermediate level in thalamus, subthalamic nucleus. Weakly expressed in corpus callosum, caudate nucleus and spinal cord.

The protein resides in the cell membrane. Contactins mediate cell surface interactions during nervous system development. Participates in oligodendrocytes generation by acting as a ligand of NOTCH1. Its association with NOTCH1 promotes NOTCH1 activation through the released notch intracellular domain (NICD) and subsequent translocation to the nucleus. Involved in motor coordination. The protein is Contactin-6 (CNTN6) of Homo sapiens (Human).